A 199-amino-acid polypeptide reads, in one-letter code: MIAYIKGLLAADGPGWVVIDVNGIGYHVSIPSTTQLPALGHEVKLFTHMSVREDGIQFFGFAKEDEKECFLLLLNVAGVGPKVALAVVSHLPPSNLRSAIAIEDVNQLVKVPGVGKKTAQRILLELKDKLKGMAAVEHSTLQQSVITTGSGDEAVEALLALGYSQGEARDAVKKAQKSAPEEDLSALIKIALKELAPSR.

Residues 1–62 are domain I; sequence MIAYIKGLLA…EDGIQFFGFA (62 aa). Residues 63–141 are domain II; it reads KEDEKECFLL…GMAAVEHSTL (79 aa). Residues 142–152 form a flexible linker region; that stretch reads QQSVITTGSGD. The tract at residues 152-199 is domain III; it reads DEAVEALLALGYSQGEARDAVKKAQKSAPEEDLSALIKIALKELAPSR.

This sequence belongs to the RuvA family. Homotetramer. Forms an RuvA(8)-RuvB(12)-Holliday junction (HJ) complex. HJ DNA is sandwiched between 2 RuvA tetramers; dsDNA enters through RuvA and exits via RuvB. An RuvB hexamer assembles on each DNA strand where it exits the tetramer. Each RuvB hexamer is contacted by two RuvA subunits (via domain III) on 2 adjacent RuvB subunits; this complex drives branch migration. In the full resolvosome a probable DNA-RuvA(4)-RuvB(12)-RuvC(2) complex forms which resolves the HJ.

It localises to the cytoplasm. Functionally, the RuvA-RuvB-RuvC complex processes Holliday junction (HJ) DNA during genetic recombination and DNA repair, while the RuvA-RuvB complex plays an important role in the rescue of blocked DNA replication forks via replication fork reversal (RFR). RuvA specifically binds to HJ cruciform DNA, conferring on it an open structure. The RuvB hexamer acts as an ATP-dependent pump, pulling dsDNA into and through the RuvAB complex. HJ branch migration allows RuvC to scan DNA until it finds its consensus sequence, where it cleaves and resolves the cruciform DNA. The protein is Holliday junction branch migration complex subunit RuvA of Desulforamulus reducens (strain ATCC BAA-1160 / DSM 100696 / MI-1) (Desulfotomaculum reducens).